A 148-amino-acid polypeptide reads, in one-letter code: UPF0260 protein Maqu_1608 (148 aa).

It belongs to the UPF0260 family.

In Marinobacter nauticus (strain ATCC 700491 / DSM 11845 / VT8) (Marinobacter aquaeolei), this protein is UPF0260 protein Maqu_1608.